A 518-amino-acid chain; its full sequence is MPTPRMSMRKLKEVLRLKWACGLTHRQISRAIGISVGAVSKFAAQASQAGLDWAAAEAMSDDELDARLRPAATNAAATTTRRIEPDYTALHRELRRKGVTLQLLWEEYAEANPGQRTYRYTQFCQKYKDWAKSIKRSMRQQHRAGEKLFADFAGPTVPVLASDGGVEFEAHVFVAVLGASNYTFACATRTETMADWIGSLCDALEFIGGVPELLVPDNPKALIARPDRYEPGLGTTTQDFVNHYGTAMLPARPRKPQDKAKVEVGVQIVERWVLARLRHYRFYSLAELNKAIAELIADLNQRPFKRLEGNRREWFERLDQPVLRPLPVRRYEIATFQKCRVNIDYHVDVGGHYYSVPHSLARQEVWARITRHGVEILHGGKRVAAHARSRLKGKHTTIAEHMPAAHRAHMEWTPGRLLNWGASVGPGAEAVVRHLLTNKPHPEMGYRACLGLLSLARKYGKHRLEAACQRALKIGSPTRRSVLSILEAGLDLQPSLPTTPAEWRSPEHENVRGPDYYH.

The HTH IS408-type domain occupies 11–94 (LKEVLRLKWA…PDYTALHREL (84 aa)). The H-T-H motif DNA-binding region spans 23–44 (LTHRQISRAIGISVGAVSKFAA). The region spanning 140–335 (QQHRAGEKLF…LPVRRYEIAT (196 aa)) is the Integrase catalytic domain. The tract at residues 496-518 (LPTTPAEWRSPEHENVRGPDYYH) is disordered. Basic and acidic residues predominate over residues 504 to 518 (RSPEHENVRGPDYYH).

It belongs to the transposase IS21/IS408/IS1162 family.

Required for the transposition of the insertion element. In Burkholderia multivorans (strain ATCC 17616 / 249), this protein is Putative transposase for insertion sequence IS408.